Consider the following 437-residue polypeptide: Vasoactive intestinal polypeptide receptor 2 (437 aa).

A signal peptide spans methionine 1–proline 22. At glutamate 23–isoleucine 123 the chain is on the extracellular side. Intrachain disulfides connect cysteine 37–cysteine 60, cysteine 51–cysteine 92, and cysteine 74–cysteine 108. Asparagine 57, asparagine 87, and asparagine 91 each carry an N-linked (GlcNAc...) asparagine glycan. Residues leucine 124 to leucine 149 traverse the membrane as a helical segment. Residues phenylalanine 150–arginine 157 are Cytoplasmic-facing. A helical membrane pass occupies residues asparagine 158–aspartate 179. Topologically, residues serine 180 to lysine 202 are extracellular. Cysteines 201 and 270 form a disulfide. A helical membrane pass occupies residues leucine 203 to histidine 227. The Cytoplasmic portion of the chain corresponds to threonine 228–arginine 238. The chain crosses the membrane as a helical span at residues cysteine 239 to alanine 260. At threonine 261–proline 279 the chain is on the extracellular side. The chain crosses the membrane as a helical span at residues tryptophan 280 to arginine 303. Over isoleucine 304–arginine 324 the chain is Cytoplasmic. The helical transmembrane segment at leucine 325–alanine 345 threads the bilayer. The Extracellular segment spans residues phenylalanine 346 to threonine 353. Residues tyrosine 354–leucine 377 traverse the membrane as a helical segment. The Cytoplasmic segment spans residues asparagine 378–isoleucine 437.

This sequence belongs to the G-protein coupled receptor 2 family. As to quaternary structure, interacts with ADCYAP1/PACAP (via N-terminal extracellular domain); activated by PACAP27 and CAPAC38 neuropeptides. Interacts with VIP; the interaction results in VIPR1 activation. In terms of tissue distribution, expressed at high levels in the MIN6 cells, at moderate levels in pancreatic islets, insulin-secreting cells, lung, brain, stomach, and colon, and at low levels in the heart.

It localises to the cell membrane. In terms of biological role, g protein-coupled receptor activated by the neuropeptides vasoactive intestinal peptide (VIP) and pituitary adenylate cyclase-activating polypeptide (ADCYAP1/PACAP). Binds VIP and both PACAP27 and PACAP38 bioactive peptides with the order of ligand affinity of VIP = PACAP38 &gt; PACAP27. Ligand binding causes a conformation change that triggers signaling via guanine nucleotide-binding proteins (G proteins) and modulates the activity of downstream effectors. Activates cAMP-dependent pathway. May be coupled to phospholipase C. The protein is Vasoactive intestinal polypeptide receptor 2 of Mus musculus (Mouse).